The sequence spans 394 residues: Dimethyladenosine transferase 2, mitochondrial (394 aa).

A mitochondrion-targeting transit peptide spans 1 to 19 (MWVPGAGIPSRLTLSAFTR). Valine 75, glutamate 123, and aspartate 149 together coordinate S-adenosyl-L-methionine. The segment at 326–327 (KR) is DNA-binding.

Belongs to the class I-like SAM-binding methyltransferase superfamily. rRNA adenine N(6)-methyltransferase family. KsgA subfamily. Homodimer. Component of the mitochondrial transcription initiation complex, composed at least of TFB2M, TFAM and POLRMT. In this complex TFAM recruits POLRMT to the promoter whereas TFB2M induces structural changes in POLRMT to enable promoter opening and trapping of the DNA non-template strand. Interacts with mitochondrial RNA polymerase POLRMT. Interacts with TFAM.

The protein localises to the mitochondrion. It catalyses the reaction adenosine in rRNA + S-adenosyl-L-methionine = N(6)-methyladenosine in rRNA + S-adenosyl-L-homocysteine + H(+). Its function is as follows. S-adenosyl-L-methionine-dependent rRNA methyltransferase which may methylate two specific adjacent adenosines in the loop of a conserved hairpin near the 3'-end of 12S mitochondrial rRNA. Component of the mitochondrial transcription initiation complex, composed at least of TFB2M, TFAM and POLRMT that is required for basal transcription of mitochondrial DNA. In this complex TFAM recruits POLRMT to a specific promoter whereas TFB2M induces structural changes in POLRMT to enable promoter opening and trapping of the DNA non-template strand. Stimulates transcription independently of the methyltransferase activity. This Bos taurus (Bovine) protein is Dimethyladenosine transferase 2, mitochondrial.